The primary structure comprises 336 residues: Inactive serine/threonine-protein kinase PLK5 (336 aa).

Residues 1–65 enclose the Protein kinase; truncated domain; it reads MYTVLTGTPP…LDHLLQDDFF (65 aa). Disordered regions lie at residues 109 to 135 and 224 to 245; these read PCPF…WDGE and GRTG…LPTP. One can recognise a POLO box domain in the interval 255–336; that stretch reads LLRFLASEHA…HHALRMLQSI (82 aa).

This sequence belongs to the protein kinase superfamily. Ser/Thr protein kinase family. CDC5/Polo subfamily. As to expression, expressed in the brain, neurons and glial cells. Also expressed in highly differentiated cells, such as the serous acini in the parotid gland, distal and proximal tubules of the kidney, tubules of the seminal gland, Kupffer cells and some hepatocytes in the liver, and some cells in the germinal center of lymph nodes (at protein level).

It is found in the nucleus. It localises to the nucleolus. Its subcellular location is the cytoplasm. In terms of biological role, inactive serine/threonine-protein kinase that plays a role in cell cycle progression and neuronal differentiation. The chain is Inactive serine/threonine-protein kinase PLK5 (PLK5) from Homo sapiens (Human).